The chain runs to 216 residues: MTQQITLALSKGRIFEETLPLLAAAGIEVLEDPEKSRKLILPTSRPEVRVVLVRATDVPTYVQYGGADLGVAGKDSLIEHGGQGLFRPLDLKIAKCRVSVAVRADFDYREAVTQGSRLKVATKYTSIARDFFASKGVHVDLIKLYGSMELAPLTGLADAIVDLVSTGNTLKANNLVEVEQIMDISSHLVVNQAALKLKQAPLRRIIDAFASAVPQG.

Belongs to the ATP phosphoribosyltransferase family. Short subfamily. Heteromultimer composed of HisG and HisZ subunits.

Its subcellular location is the cytoplasm. It carries out the reaction 1-(5-phospho-beta-D-ribosyl)-ATP + diphosphate = 5-phospho-alpha-D-ribose 1-diphosphate + ATP. It participates in amino-acid biosynthesis; L-histidine biosynthesis; L-histidine from 5-phospho-alpha-D-ribose 1-diphosphate: step 1/9. Its function is as follows. Catalyzes the condensation of ATP and 5-phosphoribose 1-diphosphate to form N'-(5'-phosphoribosyl)-ATP (PR-ATP). Has a crucial role in the pathway because the rate of histidine biosynthesis seems to be controlled primarily by regulation of HisG enzymatic activity. This Acidovorax ebreus (strain TPSY) (Diaphorobacter sp. (strain TPSY)) protein is ATP phosphoribosyltransferase.